The sequence spans 215 residues: tRNA (guanine-N(7)-)-methyltransferase (215 aa).

S-adenosyl-L-methionine-binding residues include Glu44, Glu69, Asp96, and Asp118. The active site involves Asp118. Residues Lys122, Asp154, and 191-194 contribute to the substrate site; that span reads TEYE.

It belongs to the class I-like SAM-binding methyltransferase superfamily. TrmB family.

It carries out the reaction guanosine(46) in tRNA + S-adenosyl-L-methionine = N(7)-methylguanosine(46) in tRNA + S-adenosyl-L-homocysteine. The protein operates within tRNA modification; N(7)-methylguanine-tRNA biosynthesis. Its function is as follows. Catalyzes the formation of N(7)-methylguanine at position 46 (m7G46) in tRNA. This is tRNA (guanine-N(7)-)-methyltransferase from Exiguobacterium sp. (strain ATCC BAA-1283 / AT1b).